A 508-amino-acid chain; its full sequence is MEEYQLYLELDRSRQQDFLYPLVFHEYVYGLAYSHDLNRSIFVENIGYDNKYSLLIVKRLITRMYRQNHLIISANDSNKNRFLRYNKNFDSQIISGGFAIVVEILFSLQLSSSLEEAEIIKSYKNLRSIHSIFPFFEDKVTYLNYISDIQVPYPIHLEILVQILRYWVKDAPFFHLLRLFLYDYCNWNSIIIPKKSIYTFSKNNTRFFFFLYNFYVCEYESIFFFLRTQSSHLRLKSFRFFFERIFFYAKKGHLVEVFVKDFFSTLTFFKDPFIHYVRYQGKSILASKNLPILMNKWKYYFIHLWQCYFDVWSQPGTIHINQLSEYSFHFLGYFLKGGLKHSVVRGQMLQKGFLIKIIIKKLDIIVPIIPIIRLLAKAKFCNVLGNPLSKPSWADLSDFDIIARFLRICRNLSHYYNGSSKKKSLYRIKYILRLSCIKTLACKHKSTVRAFLKRLGSEELLEEFFTEEEEILSLIFPRTPSTLRRLHRNRIWYLDIFFSNDNDLINHD.

The protein belongs to the intron maturase 2 family. MatK subfamily.

It localises to the plastid. It is found in the chloroplast. Its function is as follows. Usually encoded in the trnK tRNA gene intron. Probably assists in splicing its own and other chloroplast group II introns. The chain is Maturase K from Coronilla varia (Crown vetch).